We begin with the raw amino-acid sequence, 271 residues long: Transmembrane protein 150A (271 aa).

At 1 to 2 (MT) the chain is on the cytoplasmic side. A helical membrane pass occupies residues 3–23 (AWILLPVSLSAFSITGIWTVY). Over 24 to 75 (AMAVMNRHVCPVENWSYNESCSPDPAEQGGPKSCCTLDDVPLISKCGTYPPE) the chain is Extracellular. 2 N-linked (GlcNAc...) asparagine glycosylation sites follow: Asn37 and Asn41. A helical transmembrane segment spans residues 76-96 (SCLFSLIGNMGAVMVALICLL). The Cytoplasmic segment spans residues 97–108 (RYGQLLEQSRHS). A helical transmembrane segment spans residues 109 to 129 (WINTTALITGCTNAAGLVVVG). Residues 130 to 140 (NFQVDHAKSLH) lie on the Extracellular side of the membrane. A helical membrane pass occupies residues 141-161 (YIGTGVAFTAGLLFVCLHCVL). The Cytoplasmic portion of the chain corresponds to 162-178 (FYHGATTPLDMAMAYLR). The helical transmembrane segment at 179-199 (SVLAVIAFITLVLSGVFFLHE) threads the bilayer. Residues 200 to 211 (SSQLQHGAALCE) lie on the Extracellular side of the membrane. A helical membrane pass occupies residues 212–232 (WVFVLDILIFYGTFSYEFGTI). Topologically, residues 233–271 (SSDTLVAALQPAPGRACKSSGSSSTSTHLNCAPESIAMI) are cytoplasmic.

The protein belongs to the DRAM/TMEM150 family. Interacts (via C-terminal cytoplasmic tail) with PI4KA.

Its subcellular location is the cell membrane. Regulates localization of phosphatidylinositol 4-kinase (PI4K) to the plasma membrane, possibly by reducing the association of TTC7 (TTC7A or TTC7B) with the PI4K complex. Acts as a regulator of phosphatidylinositol 4-phosphate (PtdIns(4)P) synthesis. May also play a role in fasting-induced catabolism. The chain is Transmembrane protein 150A (Tmem150a) from Mus musculus (Mouse).